We begin with the raw amino-acid sequence, 98 residues long: Large ribosomal subunit protein uL23 (98 aa).

Belongs to the universal ribosomal protein uL23 family. Part of the 50S ribosomal subunit. Contacts protein L29, and trigger factor when it is bound to the ribosome.

One of the early assembly proteins it binds 23S rRNA. One of the proteins that surrounds the polypeptide exit tunnel on the outside of the ribosome. Forms the main docking site for trigger factor binding to the ribosome. This chain is Large ribosomal subunit protein uL23, found in Ruegeria sp. (strain TM1040) (Silicibacter sp.).